The primary structure comprises 251 residues: Probable transcriptional regulatory protein cu0933 (251 aa).

Positions 56-79 are disordered; sequence AKKSSVPNDNIERARKRGSGEEAG.

It belongs to the TACO1 family.

The protein localises to the cytoplasm. In Corynebacterium urealyticum (strain ATCC 43042 / DSM 7109), this protein is Probable transcriptional regulatory protein cu0933.